The chain runs to 266 residues: 3-methyl-2-oxobutanoate hydroxymethyltransferase 2 (266 aa).

2 residues coordinate Mg(2+): Asp45 and Asp84. 3-methyl-2-oxobutanoate contacts are provided by residues Asp45 to Ser46, Asp84, and Lys112. A Mg(2+)-binding site is contributed by Glu114. Glu181 (proton acceptor) is an active-site residue.

This sequence belongs to the PanB family. As to quaternary structure, homodecamer; pentamer of dimers. The cofactor is Mg(2+).

It localises to the cytoplasm. It catalyses the reaction 3-methyl-2-oxobutanoate + (6R)-5,10-methylene-5,6,7,8-tetrahydrofolate + H2O = 2-dehydropantoate + (6S)-5,6,7,8-tetrahydrofolate. It participates in cofactor biosynthesis; (R)-pantothenate biosynthesis; (R)-pantoate from 3-methyl-2-oxobutanoate: step 1/2. Functionally, catalyzes the reversible reaction in which hydroxymethyl group from 5,10-methylenetetrahydrofolate is transferred onto alpha-ketoisovalerate to form ketopantoate. This is 3-methyl-2-oxobutanoate hydroxymethyltransferase 2 from Pseudomonas aeruginosa (strain UCBPP-PA14).